The sequence spans 489 residues: Occludin (489 aa).

Over 1-51 (MMYEKRSYTGYGHPSSHYDYPPPSGPPGSFYLADVPPQHFYQWRSPPGIVR) the chain is Cytoplasmic. In terms of domain architecture, MARVEL spans 45–248 (SPPGIVRILQ…ICYFAQKTRH (204 aa)). Residues 52 to 74 (ILQGSVVILCLVIFACVASTLAW) traverse the membrane as a helical segment. The Extracellular segment spans residues 75–112 (EYYGSGGLLGYGGGLGSYYNGYYGGYNGYYYGGLTNPR). A helical transmembrane segment spans residues 113–137 (AANGFMIAMAVLCFLVTLGLVIAGL). At 138-147 (SKASGARSRR) the chain is on the cytoplasmic side. The helical transmembrane segment at 148-172 (FYLLVAVLSGLLAFVMLIASIVYVV) threads the bilayer. Residues 173–222 (GVNPRAGLGASSGSLYYNQMLMLCNQMMSPVAGGIMNQYLYHYCMVDPQE) lie on the Extracellular side of the membrane. Cysteine 196 and cysteine 216 are oxidised to a cystine. Residues 223 to 244 (AVAIVCGFLTVILLCVICYFAQ) form a helical membrane-spanning segment. The Cytoplasmic segment spans residues 245 to 489 (KTRHKIWKYG…MVGGYDQSRS (245 aa)). Serine 280 carries the post-translational modification Phosphoserine. Threonine 285 is modified (phosphothreonine). Serine 300 is subject to Phosphoserine. The disordered stretch occupies residues 308–382 (PAQENGYGHS…ESSGEQNRDD (75 aa)). A compositionally biased stretch (pro residues) spans 322–332 (PSVPPPEGPSP). The span at 345-354 (PARRGHRQRP) shows a compositional bias: basic residues. A phosphotyrosine mark is found at tyrosine 364 and tyrosine 368. Positions 365–377 (ETDYTTAAESSGE) are enriched in polar residues. Threonine 369 and threonine 370 each carry phosphothreonine; by PKC/PRKCH. Phosphoserine is present on serine 374. Residues 381–489 (DDWASLYPPI…MVGGYDQSRS (109 aa)) form the OCEL domain. Residues 407 to 434 (LQRYKALCAEMDDIGTQLRQLSHELDCL) are a coiled coil. Residue serine 457 is modified to Phosphoserine.

It belongs to the ELL/occludin family. In terms of assembly, interacts with TJP1/ZO1. Interacts with VAPA. Interacts with CLDN1, CLDN6, CLDN9, CLDN11, CLDN12 and CLDN17. Interacts with PLSCR1. Interacts with LSR, ILDR1 and ILDR2. Interacts with TJP2/ZO2. In terms of processing, dephosphorylated by PTPRJ. Localized at tight junctions of both epithelial and endothelial cells.

Its subcellular location is the cell membrane. The protein resides in the cell junction. It is found in the tight junction. May play a role in the formation and regulation of the tight junction (TJ) paracellular permeability barrier. This is Occludin (OCLN) from Potorous tridactylus (Potoroo).